The following is a 237-amino-acid chain: N-alpha-acetyltransferase 40 (237 aa).

G2 carries the N-myristoyl glycine lipid modification. One can recognise an N-acetyltransferase domain in the interval 63–216 (SGLEPATVDW…EDCSYEILSR (154 aa)). Substrate contacts are provided by residues Y85, 127-129 (DVE), and Y138. Acetyl-CoA contacts are provided by residues 140–142 (VQL) and 148–153 (RKGLGK). T174 provides a ligand contact to substrate. N179 serves as a coordination point for acetyl-CoA. Substrate is bound by residues S197 and Y211.

Belongs to the acetyltransferase family. NAA40 subfamily.

Its subcellular location is the cytoplasm. It localises to the nucleus. The enzyme catalyses N-terminal L-seryl-[histone H4] + acetyl-CoA = N-terminal N(alpha)-acetyl-L-seryl-[histone H4] + CoA + H(+). It carries out the reaction N-terminal L-seryl-[histone H2A] + acetyl-CoA = N-terminal N(alpha)-acetyl-L-seryl-[histone H2A] + CoA + H(+). Its function is as follows. N-alpha-acetyltransferase that specifically mediates the acetylation of the N-terminal residues of histones H4 and H2A. In contrast to other N-alpha-acetyltransferase, has a very specific selectivity for histones H4 and H2A N-terminus and specifically recognizes the 'Ser-Gly-Arg-Gly sequence'. Acts as a negative regulator of apoptosis. May play a role in hepatic lipid metabolism. In Mus musculus (Mouse), this protein is N-alpha-acetyltransferase 40.